The primary structure comprises 339 residues: Holliday junction branch migration complex subunit RuvB (339 aa).

Residues 2 to 187 (KDVNEEERII…FGIIEHMQYY (186 aa)) form a large ATPase domain (RuvB-L) region. Residues leucine 26, arginine 27, glycine 68, lysine 71, threonine 72, threonine 73, 134–136 (EDF), arginine 177, tyrosine 187, and arginine 224 each bind ATP. Residue threonine 72 participates in Mg(2+) binding. Residues 188–258 (SVEDLEKIIQ…TTKHSLHLLE (71 aa)) form a small ATPAse domain (RuvB-S) region. The segment at 261 to 339 (DEGLDQTDRK…QLGYPPKDEK (79 aa)) is head domain (RuvB-H). Residues arginine 316 and arginine 321 each contribute to the DNA site.

Belongs to the RuvB family. As to quaternary structure, homohexamer. Forms an RuvA(8)-RuvB(12)-Holliday junction (HJ) complex. HJ DNA is sandwiched between 2 RuvA tetramers; dsDNA enters through RuvA and exits via RuvB. An RuvB hexamer assembles on each DNA strand where it exits the tetramer. Each RuvB hexamer is contacted by two RuvA subunits (via domain III) on 2 adjacent RuvB subunits; this complex drives branch migration. In the full resolvosome a probable DNA-RuvA(4)-RuvB(12)-RuvC(2) complex forms which resolves the HJ.

The protein resides in the cytoplasm. It catalyses the reaction ATP + H2O = ADP + phosphate + H(+). In terms of biological role, the RuvA-RuvB-RuvC complex processes Holliday junction (HJ) DNA during genetic recombination and DNA repair, while the RuvA-RuvB complex plays an important role in the rescue of blocked DNA replication forks via replication fork reversal (RFR). RuvA specifically binds to HJ cruciform DNA, conferring on it an open structure. The RuvB hexamer acts as an ATP-dependent pump, pulling dsDNA into and through the RuvAB complex. RuvB forms 2 homohexamers on either side of HJ DNA bound by 1 or 2 RuvA tetramers; 4 subunits per hexamer contact DNA at a time. Coordinated motions by a converter formed by DNA-disengaged RuvB subunits stimulates ATP hydrolysis and nucleotide exchange. Immobilization of the converter enables RuvB to convert the ATP-contained energy into a lever motion, pulling 2 nucleotides of DNA out of the RuvA tetramer per ATP hydrolyzed, thus driving DNA branch migration. The RuvB motors rotate together with the DNA substrate, which together with the progressing nucleotide cycle form the mechanistic basis for DNA recombination by continuous HJ branch migration. Branch migration allows RuvC to scan DNA until it finds its consensus sequence, where it cleaves and resolves cruciform DNA. The polypeptide is Holliday junction branch migration complex subunit RuvB (Lactobacillus johnsonii (strain CNCM I-12250 / La1 / NCC 533)).